Consider the following 98-residue polypeptide: Protein translation factor SUI1 homolog (98 aa).

It belongs to the SUI1 family.

The chain is Protein translation factor SUI1 homolog from Thermococcus kodakarensis (strain ATCC BAA-918 / JCM 12380 / KOD1) (Pyrococcus kodakaraensis (strain KOD1)).